The chain runs to 932 residues: DNA mismatch repair protein MutS (932 aa).

615–622 (GPNMAGKS) provides a ligand contact to ATP.

The protein belongs to the DNA mismatch repair MutS family.

Functionally, this protein is involved in the repair of mismatches in DNA. It is possible that it carries out the mismatch recognition step. This protein has a weak ATPase activity. The protein is DNA mismatch repair protein MutS of Clostridium botulinum (strain 657 / Type Ba4).